The sequence spans 105 residues: Large ribosomal subunit protein eL36 (105 aa).

The disordered stretch occupies residues 1-36 (MAQERSGIAVGLNKGHKTTPLNTPKTRISRSKGKAS). Positions 27 to 36 (RISRSKGKAS) are enriched in basic residues.

It belongs to the eukaryotic ribosomal protein eL36 family. As to quaternary structure, component of the large ribosomal subunit (LSU).

Its subcellular location is the cytoplasm. Component of the ribosome, a large ribonucleoprotein complex responsible for the synthesis of proteins in the cell. The small ribosomal subunit (SSU) binds messenger RNAs (mRNAs) and translates the encoded message by selecting cognate aminoacyl-transfer RNA (tRNA) molecules. The large subunit (LSU) contains the ribosomal catalytic site termed the peptidyl transferase center (PTC), which catalyzes the formation of peptide bonds, thereby polymerizing the amino acids delivered by tRNAs into a polypeptide chain. The nascent polypeptides leave the ribosome through a tunnel in the LSU and interact with protein factors that function in enzymatic processing, targeting, and the membrane insertion of nascent chains at the exit of the ribosomal tunnel. This chain is Large ribosomal subunit protein eL36, found in Emericella nidulans (strain FGSC A4 / ATCC 38163 / CBS 112.46 / NRRL 194 / M139) (Aspergillus nidulans).